A 287-amino-acid polypeptide reads, in one-letter code: 2-dehydro-3-deoxyphosphooctonate aldolase (287 aa).

The protein belongs to the KdsA family.

Its subcellular location is the cytoplasm. It carries out the reaction D-arabinose 5-phosphate + phosphoenolpyruvate + H2O = 3-deoxy-alpha-D-manno-2-octulosonate-8-phosphate + phosphate. The protein operates within carbohydrate biosynthesis; 3-deoxy-D-manno-octulosonate biosynthesis; 3-deoxy-D-manno-octulosonate from D-ribulose 5-phosphate: step 2/3. It functions in the pathway bacterial outer membrane biogenesis; lipopolysaccharide biosynthesis. This is 2-dehydro-3-deoxyphosphooctonate aldolase from Nitrobacter hamburgensis (strain DSM 10229 / NCIMB 13809 / X14).